A 430-amino-acid chain; its full sequence is GTPase Obg (430 aa).

The region spanning 1 to 158 (MFVDQVKISL…LDVSLELKLL (158 aa)) is the Obg domain. Residues 118 to 145 (KGGRGGRGNSRFATPRNPAPDFSEKGEP) form a disordered region. The 171-residue stretch at 159-329 (ADVGLVGFPS…LLYAIADKLE (171 aa)) folds into the OBG-type G domain. GTP-binding positions include 165 to 172 (GFPSVGKS), 190 to 194 (FTTIK), 212 to 215 (DLPG), 282 to 285 (NKMD), and 310 to 312 (STI). Mg(2+) is bound by residues S172 and T192. Positions 352–430 (KHTPSQDKFT…ILGGEFEFVE (79 aa)) constitute an OCT domain.

This sequence belongs to the TRAFAC class OBG-HflX-like GTPase superfamily. OBG GTPase family. As to quaternary structure, monomer. Mg(2+) is required as a cofactor.

Its subcellular location is the cytoplasm. Its function is as follows. An essential GTPase which binds GTP, GDP and possibly (p)ppGpp with moderate affinity, with high nucleotide exchange rates and a fairly low GTP hydrolysis rate. Plays a role in control of the cell cycle, stress response, ribosome biogenesis and in those bacteria that undergo differentiation, in morphogenesis control. The sequence is that of GTPase Obg from Staphylococcus aureus (strain Mu3 / ATCC 700698).